A 454-amino-acid polypeptide reads, in one-letter code: Bifunctional protein GlmU (454 aa).

Positions 1–226 are pyrophosphorylase; the sequence is MALNVVILAA…AIEVEGANNR (226 aa). Residues 8–11, lysine 22, glutamine 73, 78–79, 100–102, glycine 137, glutamate 151, asparagine 166, and asparagine 224 each bind UDP-N-acetyl-alpha-D-glucosamine; these read LAAG, GT, and YGD. Aspartate 102 contributes to the Mg(2+) binding site. Asparagine 224 is a binding site for Mg(2+). The tract at residues 227–247 is linker; sequence VQLAQLERAYQAREAEKLMIA. Positions 248 to 454 are N-acetyltransferase; that stretch reads GANLRDPSRI…GWQRPVKIKK (207 aa). Arginine 330 and lysine 348 together coordinate UDP-N-acetyl-alpha-D-glucosamine. Catalysis depends on histidine 360, which acts as the Proton acceptor. Tyrosine 363 and asparagine 374 together coordinate UDP-N-acetyl-alpha-D-glucosamine. Acetyl-CoA is bound by residues alanine 377, 383 to 384, serine 402, alanine 420, and arginine 437; that span reads NY.

In the N-terminal section; belongs to the N-acetylglucosamine-1-phosphate uridyltransferase family. It in the C-terminal section; belongs to the transferase hexapeptide repeat family. Homotrimer. The cofactor is Mg(2+).

It localises to the cytoplasm. It carries out the reaction alpha-D-glucosamine 1-phosphate + acetyl-CoA = N-acetyl-alpha-D-glucosamine 1-phosphate + CoA + H(+). The enzyme catalyses N-acetyl-alpha-D-glucosamine 1-phosphate + UTP + H(+) = UDP-N-acetyl-alpha-D-glucosamine + diphosphate. Its pathway is nucleotide-sugar biosynthesis; UDP-N-acetyl-alpha-D-glucosamine biosynthesis; N-acetyl-alpha-D-glucosamine 1-phosphate from alpha-D-glucosamine 6-phosphate (route II): step 2/2. It functions in the pathway nucleotide-sugar biosynthesis; UDP-N-acetyl-alpha-D-glucosamine biosynthesis; UDP-N-acetyl-alpha-D-glucosamine from N-acetyl-alpha-D-glucosamine 1-phosphate: step 1/1. It participates in bacterial outer membrane biogenesis; LPS lipid A biosynthesis. Catalyzes the last two sequential reactions in the de novo biosynthetic pathway for UDP-N-acetylglucosamine (UDP-GlcNAc). The C-terminal domain catalyzes the transfer of acetyl group from acetyl coenzyme A to glucosamine-1-phosphate (GlcN-1-P) to produce N-acetylglucosamine-1-phosphate (GlcNAc-1-P), which is converted into UDP-GlcNAc by the transfer of uridine 5-monophosphate (from uridine 5-triphosphate), a reaction catalyzed by the N-terminal domain. The chain is Bifunctional protein GlmU from Shewanella sp. (strain MR-4).